The following is a 305-amino-acid chain: Ribonuclease BN (305 aa).

Residues histidine 63, histidine 65, aspartate 67, histidine 68, histidine 141, aspartate 212, and histidine 270 each contribute to the Zn(2+) site. The Proton acceptor role is filled by aspartate 67.

The protein belongs to the RNase Z family. RNase BN subfamily. In terms of assembly, homodimer. Requires Zn(2+) as cofactor.

Zinc phosphodiesterase, which has both exoribonuclease and endoribonuclease activities. The chain is Ribonuclease BN from Proteus mirabilis (strain HI4320).